The sequence spans 640 residues: Protein SPT10 (640 aa).

Positions 1 to 30 are disordered; sequence MLNQHTSSVPDDEHLQMAHQNSSSEVRNEA. An N-acetyltransferase domain is found at 121–259; sequence LDYSMDTEAD…AGILKGFDVP (139 aa). A disordered region spans residues 534–565; sequence PHLTNNESQDHANPVNRDERDMNHSVPDLDRN. Residues 549–565 show a composition bias toward basic and acidic residues; the sequence is NRDERDMNHSVPDLDRN.

Required for normal transcription at a number of loci in yeast. Affects transcription at Ty1 elements, at PHO5, STE6 and ADH2. The chain is Protein SPT10 (SPT10) from Saccharomyces cerevisiae (strain ATCC 204508 / S288c) (Baker's yeast).